Here is a 382-residue protein sequence, read N- to C-terminus: Succinate--CoA ligase [ADP-forming] subunit beta 1 (382 aa).

An ATP-grasp domain is found at 9–235 (KQIFAKHGIR…ATEEDPLERE (227 aa)). Residues Lys-45, 52–54 (GRG), Glu-91, Leu-94, and Glu-99 each bind ATP. Positions 191 and 204 each coordinate Mg(2+). Asn-255 lines the substrate pocket.

Belongs to the succinate/malate CoA ligase beta subunit family. Heterotetramer of two alpha and two beta subunits. Mg(2+) serves as cofactor.

The enzyme catalyses succinate + ATP + CoA = succinyl-CoA + ADP + phosphate. It catalyses the reaction GTP + succinate + CoA = succinyl-CoA + GDP + phosphate. It functions in the pathway carbohydrate metabolism; tricarboxylic acid cycle; succinate from succinyl-CoA (ligase route): step 1/1. Succinyl-CoA synthetase functions in the citric acid cycle (TCA), coupling the hydrolysis of succinyl-CoA to the synthesis of either ATP or GTP and thus represents the only step of substrate-level phosphorylation in the TCA. The beta subunit provides nucleotide specificity of the enzyme and binds the substrate succinate, while the binding sites for coenzyme A and phosphate are found in the alpha subunit. The polypeptide is Succinate--CoA ligase [ADP-forming] subunit beta 1 (Archaeoglobus fulgidus (strain ATCC 49558 / DSM 4304 / JCM 9628 / NBRC 100126 / VC-16)).